Consider the following 97-residue polypeptide: Large ribosomal subunit protein uL23 (97 aa).

Belongs to the universal ribosomal protein uL23 family. As to quaternary structure, part of the 50S ribosomal subunit. Contacts protein L29, and trigger factor when it is bound to the ribosome.

In terms of biological role, one of the early assembly proteins it binds 23S rRNA. One of the proteins that surrounds the polypeptide exit tunnel on the outside of the ribosome. Forms the main docking site for trigger factor binding to the ribosome. In Brucella suis (strain ATCC 23445 / NCTC 10510), this protein is Large ribosomal subunit protein uL23.